Reading from the N-terminus, the 529-residue chain is Peptide chain release factor 3 (529 aa).

A tr-type G domain is found at 11–280 (SKRRTFAIIS…GLTEWAPAPK (270 aa)). GTP is bound by residues 20–27 (SHPDAGKT), 88–92 (DTPGH), and 142–145 (NKLD).

Belongs to the TRAFAC class translation factor GTPase superfamily. Classic translation factor GTPase family. PrfC subfamily.

It localises to the cytoplasm. Functionally, increases the formation of ribosomal termination complexes and stimulates activities of RF-1 and RF-2. It binds guanine nucleotides and has strong preference for UGA stop codons. It may interact directly with the ribosome. The stimulation of RF-1 and RF-2 is significantly reduced by GTP and GDP, but not by GMP. In Vibrio parahaemolyticus serotype O3:K6 (strain RIMD 2210633), this protein is Peptide chain release factor 3.